A 1241-amino-acid chain; its full sequence is ATP-dependent helicase/nuclease subunit A (1241 aa).

In terms of domain architecture, UvrD-like helicase ATP-binding spans 12 to 485; the sequence is SQWTDDQWKA…IDLAKNFRSR (474 aa). Residue 33–40 participates in ATP binding; the sequence is AAAGSGKT. Residues 505 to 805 form the UvrD-like helicase C-terminal domain; the sequence is GEIDYDADAE…RIMTIHKSKG (301 aa).

It belongs to the helicase family. AddA subfamily. Heterodimer of AddA and AddB/RexB. It depends on Mg(2+) as a cofactor.

The catalysed reaction is Couples ATP hydrolysis with the unwinding of duplex DNA by translocating in the 3'-5' direction.. It carries out the reaction ATP + H2O = ADP + phosphate + H(+). The heterodimer acts as both an ATP-dependent DNA helicase and an ATP-dependent, dual-direction single-stranded exonuclease. Recognizes the chi site generating a DNA molecule suitable for the initiation of homologous recombination. The AddA nuclease domain is required for chi fragment generation; this subunit has the helicase and 3' -&gt; 5' nuclease activities. The protein is ATP-dependent helicase/nuclease subunit A of Bacillus cereus (strain AH187).